The primary structure comprises 1612 residues: uncharacterized protein (1612 aa).

A coiled-coil region spans residues 23–52 (ENKNIEMTTLKDKKEMKNENLSKINVKKEN). Over residues 46-93 (INVKKENHDKNHDKNHDKNHDKNHDKNHDKNHDKNHDKNHDKNHDKNH) the composition is skewed to basic and acidic residues. Disordered stretches follow at residues 46–94 (INVK…KNHV) and 369–400 (EDDN…HEIQ). Positions 375–394 (DNPLYSNNNTLKEQNTSTPL) are enriched in polar residues. Residues 479–499 (FIVTLSEICLILTPHYVNIIN) traverse the membrane as a helical segment. Disordered regions lie at residues 698–777 (TSLT…EKKL), 992–1037 (NELD…KNDP), 1091–1157 (SGKS…RNMS), and 1257–1291 (NQTT…NQDK). Basic and acidic residues predominate over residues 708 to 777 (KNDEIKKTGE…KKKTGEEKKL (70 aa)). Composition is skewed to low complexity over residues 996 to 1028 (NNNN…NNNN), 1102 to 1140 (SNNN…NSTN), and 1257 to 1271 (NQTT…QTSN). Coiled coils occupy residues 1338–1362 (YCNN…INNK), 1444–1469 (SNKK…IDND), and 1553–1601 (NMED…KFLT). Over residues 1554-1566 (MEDEKNEKLNDKE) the composition is skewed to basic and acidic residues. The interval 1554-1612 (MEDEKNEKLNDKEGEYEDVTENLNEQEAEEEAEEEAEEEEEEEDKFLTPEHLPINVEIK) is disordered. Positions 1567-1597 (GEYEDVTENLNEQEAEEEAEEEAEEEEEEED) are enriched in acidic residues.

The protein localises to the membrane. This is an uncharacterized protein from Plasmodium falciparum (isolate 3D7).